The sequence spans 341 residues: Phosphate acyltransferase (341 aa).

This sequence belongs to the PlsX family. In terms of assembly, homodimer. Probably interacts with PlsY.

It localises to the cytoplasm. It catalyses the reaction a fatty acyl-[ACP] + phosphate = an acyl phosphate + holo-[ACP]. It participates in lipid metabolism; phospholipid metabolism. Catalyzes the reversible formation of acyl-phosphate (acyl-PO(4)) from acyl-[acyl-carrier-protein] (acyl-ACP). This enzyme utilizes acyl-ACP as fatty acyl donor, but not acyl-CoA. The chain is Phosphate acyltransferase from Nostoc sp. (strain PCC 7120 / SAG 25.82 / UTEX 2576).